Consider the following 211-residue polypeptide: MTIGVVGRKAGMTRIFTEEGVSIPVTVIEIEPNRVTQFKTEETDGYRAVQVTVGERRASRVTAAQAGHFAKANVAAGRTVMEFRLEEGEYQAGDLINAEIFAAGQLVDVTGQSKGKGFQGTIKRWNFRGQDNTHGNSVSHRVPGSIGQCQTPGRVFKGKKMSGHMGAERVTVQSLEVVRVDAERNLLLVKGAVPGATGGNLVVRPAAKARG.

Residue Gln-150 is modified to N5-methylglutamine.

This sequence belongs to the universal ribosomal protein uL3 family. Part of the 50S ribosomal subunit. Forms a cluster with proteins L14 and L19. In terms of processing, methylated by PrmB.

Its function is as follows. One of the primary rRNA binding proteins, it binds directly near the 3'-end of the 23S rRNA, where it nucleates assembly of the 50S subunit. In Pseudomonas fluorescens (strain Pf0-1), this protein is Large ribosomal subunit protein uL3.